A 358-amino-acid chain; its full sequence is DnaJ homolog subfamily B member 11 (358 aa).

The signal sequence occupies residues 1–22 (MAPQNLGTLCLLLLYLLGAAIA). The 66-residue stretch at 25-90 (DFYKILGVPR…EKRKQYDTYG (66 aa)) folds into the J domain. Threonine 188 is subject to Phosphothreonine. A glycan (N-linked (GlcNAc...) asparagine) is linked at asparagine 261.

Part of a large chaperone multiprotein complex comprising DNAJB11, HSP90B1, HSPA5, HYOU, PDIA2, PDIA4, PDIA6, PPIB, SDF2L1, UGGT1 and very small amounts of ERP29, but not, or at very low levels, CALR nor CANX. Binds to denatured substrates in an ATP-independent manner. Interacts via the J domain with HSPA5 in an ATP-dependent manner. Contains high-mannose Endo H-sensitive carbohydrates. In terms of processing, cys-169, Cys-171, Cys-193 and Cys-196 form intramolecular disulfide bonds. The preferential partner for each Cys is not known. In terms of tissue distribution, pancreas.

It is found in the endoplasmic reticulum lumen. Its function is as follows. As a co-chaperone for HSPA5 it is required for proper folding, trafficking or degradation of proteins. Binds directly to both unfolded proteins that are substrates for ERAD and nascent unfolded peptide chains, but dissociates from the HSPA5-unfolded protein complex before folding is completed. May help recruiting HSPA5 and other chaperones to the substrate. Stimulates HSPA5 ATPase activity. It is necessary for maturation and correct trafficking of PKD1. This Canis lupus familiaris (Dog) protein is DnaJ homolog subfamily B member 11 (DNAJB11).